The chain runs to 359 residues: D-alanine--D-alanine ligase (359 aa).

One can recognise an ATP-grasp domain in the interval 141–346 (KRIFKEAGLP…YSTLLDELIN (206 aa)). 172 to 227 (IEHLGYPCFVKPANLGSSVGITKVHNEEELPGALKLAAKYDRKLLIERGIDAREIE) lines the ATP pocket. Mg(2+)-binding residues include Asp-299, Glu-313, and Asn-315.

The protein belongs to the D-alanine--D-alanine ligase family. It depends on Mg(2+) as a cofactor. The cofactor is Mn(2+).

The protein localises to the cytoplasm. The enzyme catalyses 2 D-alanine + ATP = D-alanyl-D-alanine + ADP + phosphate + H(+). It participates in cell wall biogenesis; peptidoglycan biosynthesis. In terms of biological role, cell wall formation. This chain is D-alanine--D-alanine ligase, found in Thermoanaerobacter pseudethanolicus (strain ATCC 33223 / 39E) (Clostridium thermohydrosulfuricum).